The sequence spans 203 residues: Small ribosomal subunit protein uS4 (203 aa).

Residues 15–46 form a disordered region; that stretch reads LGENIWGRPKSSVNRRSYGPGQHGQRRKSKVS. One can recognise an S4 RNA-binding domain in the interval 94 to 154; it reads QRLDMVVYRA…KKAKEMALIA (61 aa).

Belongs to the universal ribosomal protein uS4 family. As to quaternary structure, part of the 30S ribosomal subunit. Contacts protein S5. The interaction surface between S4 and S5 is involved in control of translational fidelity.

Its function is as follows. One of the primary rRNA binding proteins, it binds directly to 16S rRNA where it nucleates assembly of the body of the 30S subunit. In terms of biological role, with S5 and S12 plays an important role in translational accuracy. The polypeptide is Small ribosomal subunit protein uS4 (Novosphingobium aromaticivorans (strain ATCC 700278 / DSM 12444 / CCUG 56034 / CIP 105152 / NBRC 16084 / F199)).